Consider the following 249-residue polypeptide: Ditrans,polycis-undecaprenyl-diphosphate synthase ((2E,6E)-farnesyl-diphosphate specific) (249 aa).

The active site involves Asp26. Residue Asp26 coordinates Mg(2+). Residues Gly27–Arg30, Trp31, Arg39, His43, and Ser71–Glu73 contribute to the substrate site. The active-site Proton acceptor is the Asn74. Substrate is bound by residues Trp75, Arg77, Arg194, and Arg200–Ser202. Mg(2+) is bound at residue Glu213.

It belongs to the UPP synthase family. In terms of assembly, homodimer. Requires Mg(2+) as cofactor.

It carries out the reaction 8 isopentenyl diphosphate + (2E,6E)-farnesyl diphosphate = di-trans,octa-cis-undecaprenyl diphosphate + 8 diphosphate. Its function is as follows. Catalyzes the sequential condensation of isopentenyl diphosphate (IPP) with (2E,6E)-farnesyl diphosphate (E,E-FPP) to yield (2Z,6Z,10Z,14Z,18Z,22Z,26Z,30Z,34E,38E)-undecaprenyl diphosphate (di-trans,octa-cis-UPP). UPP is the precursor of glycosyl carrier lipid in the biosynthesis of bacterial cell wall polysaccharide components such as peptidoglycan and lipopolysaccharide. This chain is Ditrans,polycis-undecaprenyl-diphosphate synthase ((2E,6E)-farnesyl-diphosphate specific), found in Buchnera aphidicola subsp. Schizaphis graminum (strain Sg).